A 197-amino-acid chain; its full sequence is UPF0301 protein A2cp1_4106 (197 aa).

This sequence belongs to the UPF0301 (AlgH) family.

This is UPF0301 protein A2cp1_4106 from Anaeromyxobacter dehalogenans (strain 2CP-1 / ATCC BAA-258).